The sequence spans 73 residues: Potassium channel toxin alpha-KTx 27.4 (73 aa).

An N-terminal signal peptide occupies residues 1–26; sequence MKFLFLTLVLLYFTAILVFIVFPSYA.

Belongs to the short scorpion toxin superfamily. Potassium channel inhibitor family. Alpha-KTx 27 subfamily. Post-translationally, contains 4 disulfide bonds. Expressed by the venom gland.

The protein localises to the secreted. The polypeptide is Potassium channel toxin alpha-KTx 27.4 (Mesobuthus gibbosus (Mediterranean checkered scorpion)).